We begin with the raw amino-acid sequence, 679 residues long: MAEGDGAPPSSWEKDLAEALEEGGCDLETVRNIIQGRQLPADLRAKVWKIALNVVGKGDSLASWDGCLDLPEQSIIHKDCQELIDRLSVPEDEKSVLLLDIESVITFYCKSRNVKYSSCLGWIHLLRPLVHLRLPRSDLYNCFYAIMNKYIPRDCFLKGRPFHLFRLLLQYHEPELCSFLDTKKMTPDSYALNWLGSLFSYYCSTEVTQAIWDGYLQQADPFFIYFLMLIILVNAKDVILAQESEKEEMLKFLETSPANLEVEDIEDLFSLAQYYCSKTPASFRKDNHSLFGSSLLGLKDDDTDLSQALCLAVSVSEILQANQQQGEGVRFFVVDCRPAEQYNAGHLSTAFHLDSDLMLQNPSEFAQSVKSLLEAQKQSIESGSIAGGEHLCFMGSGREEEDMYMNMVLAHFLQKNKEYVSIARGGFMALQQHLADINVEGPENGYGHWIASTSGSRSSINSSVDGDSPNGSSDGKGVKSLVNKMTVALKTKSVNVKEKVISFIENTSTPVDRHVSSSDRVGKPYRGVKPVFSIGDEEEYDTDGIDSSSMSDDDRKEVVNIQTWINKPDVKYNFPCNEVKENGHMFPSHLLVTATNMYCLREIPSRKGLAYIQSRQALNSVVKITSKKKHPELITFKYGNSNTSGIEILAVERYLIPNAGDATKAIKQQIMKVLDALES.

The Rab-GAP TBC domain occupies 38–219 (QLPADLRAKV…AIWDGYLQQA (182 aa)). A Rhodanese domain is found at 327–439 (EGVRFFVVDC…LQQHLADINV (113 aa)). The span at 454–468 (SGSRSSINSSVDGDS) shows a compositional bias: low complexity. The disordered stretch occupies residues 454 to 478 (SGSRSSINSSVDGDSPNGSSDGKGV).

Its subcellular location is the golgi apparatus. The protein resides in the trans-Golgi network. Its function is as follows. Putative Rab GTPase-activating protein which plays a role in vesicular trafficking. Involved in endosome-to-Golgi trafficking. Acts as a bridging protein by binding simultaneously to golgins, located at the trans-Golgi, and to the WASH complex, located on endosome-derived vesicles. Plays a role in brain development. May act as a general inhibitor of innate immunity signaling. In Gallus gallus (Chicken), this protein is TBC1 domain family member 23 (TBC1D23).